Here is a 378-residue protein sequence, read N- to C-terminus: 3-ketosteroid-9-alpha-monooxygenase, oxygenase component (378 aa).

The 103-residue stretch at 26–128 (WHCIGLAKDF…TMERNGVLFV (103 aa)) folds into the Rieske domain. [2Fe-2S] cluster-binding residues include C67, H69, C86, and H89. Fe cation-binding residues include N175, H181, H186, and D305.

In terms of assembly, homotrimer. The two-component system 3-ketosteroid-9-alpha-monooxygenase is composed of an oxygenase component KshA and a reductase component KshB. [2Fe-2S] cluster is required as a cofactor. It depends on Fe cation as a cofactor.

The catalysed reaction is androsta-1,4-diene-3,17-dione + 2 reduced [2Fe-2S]-[ferredoxin] + O2 + 2 H(+) = 9alpha-hydroxyandrosta-1,4-diene-3,17-dione + 2 oxidized [2Fe-2S]-[ferredoxin] + H2O. Its activity is regulated as follows. KSH activity is completely inhibited by zinc ions. KshA is specifically inhibited by Fe(3+), Co(2+), Zn(2+) and Ni(2+) ions. In vitro, catalyzes the introduction of a 9alpha-hydroxyl moiety into the ring B of 3-ketosteroid substrates such as 1,4-androstadiene-3,17-dione (ADD), 4-androstene-3,17-dione (AD), 4-androstene-17beta-ol-3-one (testosterone), 4-pregnene-3,20-dione (progesterone), 19-nor-4-androstene-3,17-dione (nordion), 1-(5alpha)-androstene-3,17-dione, 5alpha-androstane-3,17-dione and 5beta-androstane-3,17-dione. KSH has the highest activity with 3-keto-delta4 steroid substrates. This is 3-ketosteroid-9-alpha-monooxygenase, oxygenase component from Rhodococcus rhodochrous.